A 461-amino-acid chain; its full sequence is MKNTSSSTTLTMNDTIAAIATPSGKGAISIIKISGHNALNILKQLTKKQDFTPRYAYVRDIFSDGVLLDKALVIYFKAPYSFTGEDVCEIQCHGSPLLAQNILQACLNLGARLAKAGEFSKKAFLNHKMDLSEIEASVQLILCEDESVLNALARQLKGELKIFIEEARSDLLKLLASSEVLIDYSEEDIPSDFLKEVSFNLEKQIASFKDLLDFSNAQKQKNKGHALSIVGKPNAGKSSLLNAMLLEERALVSDIKGTTRDTIEEVIELKGHKVRLIDTAGIRESADKIERLGIEKSLKSLENCDIILGVFDLSKPLEKEDFTIIDALNRAKKPCIVVLNKNDLAPKLELEILKSHLKIPYSILETNTLNSKACLKDLGQKISAFFPKLDTQNKLLLTSLAQKTALENAITELQNAKNHLETLELFSYHLLSAIENLNSLTRPYETSQMLDSMFSEFCLGK.

Residues K32, E89, and K128 each contribute to the (6S)-5-formyl-5,6,7,8-tetrahydrofolate site. The region spanning 224-387 (GHALSIVGKP…LGQKISAFFP (164 aa)) is the TrmE-type G domain. K(+) is bound at residue N234. GTP contacts are provided by residues 234–239 (NAGKSS), 253–259 (SDIKGTT), and 278–281 (DTAG). S238 provides a ligand contact to Mg(2+). S253, I255, and T258 together coordinate K(+). Residue T259 coordinates Mg(2+). A (6S)-5-formyl-5,6,7,8-tetrahydrofolate-binding site is contributed by K461.

This sequence belongs to the TRAFAC class TrmE-Era-EngA-EngB-Septin-like GTPase superfamily. TrmE GTPase family. In terms of assembly, homodimer. Heterotetramer of two MnmE and two MnmG subunits. The cofactor is K(+).

The protein resides in the cytoplasm. Exhibits a very high intrinsic GTPase hydrolysis rate. Involved in the addition of a carboxymethylaminomethyl (cmnm) group at the wobble position (U34) of certain tRNAs, forming tRNA-cmnm(5)s(2)U34. This is tRNA modification GTPase MnmE from Helicobacter pylori (strain HPAG1).